An 872-amino-acid chain; its full sequence is Alanine--tRNA ligase (872 aa).

4 residues coordinate Zn(2+): H567, H571, C669, and H673.

The protein belongs to the class-II aminoacyl-tRNA synthetase family. Zn(2+) is required as a cofactor.

The protein localises to the cytoplasm. It carries out the reaction tRNA(Ala) + L-alanine + ATP = L-alanyl-tRNA(Ala) + AMP + diphosphate. Its function is as follows. Catalyzes the attachment of alanine to tRNA(Ala) in a two-step reaction: alanine is first activated by ATP to form Ala-AMP and then transferred to the acceptor end of tRNA(Ala). Also edits incorrectly charged Ser-tRNA(Ala) and Gly-tRNA(Ala) via its editing domain. The polypeptide is Alanine--tRNA ligase (Streptococcus pneumoniae serotype 2 (strain D39 / NCTC 7466)).